The primary structure comprises 790 residues: Threonine--tRNA ligase 2, cytoplasmic (790 aa).

N-acetylalanine is present on Ala-2. The stretch at 13–68 (SRLQRQEEDIRWLCAEVQRLRDEQLRGPERGQAEGPRLTREVAQLQAENRDLHQRL) forms a coiled coil. Positions 80 to 117 (RTEAGRAAAHEPPTQNQEKDTKKKRLKQSEPGREVKQP) are disordered. The span at 96-117 (QEKDTKKKRLKQSEPGREVKQP) shows a compositional bias: basic and acidic residues. One can recognise a TGS domain in the interval 148–210 (NVISVRVAGG…EGDSTVELLM (63 aa)). Position 441 is a phosphoserine (Ser-441). Positions 774–780 (KLKNLKK) match the Nuclear localization signal motif.

Belongs to the class-II aminoacyl-tRNA synthetase family. In terms of assembly, may be a component of the multisynthetase complex (MSC), a large multi-subunit complex which contains at least eight different aminoacyl-tRNA synthetases plus three auxillary subunits AIMP1, AIMP2 and EEF1E1. Interacts with the MSC components EPRS1, AIMP1, AIMP2 and KARS1. As to expression, ubiquitous (at protein level). Strongly expressed in muscle (at protein level). Moderately expressed in heart and liver (at protein level). Weakly expressed in stomach, kidney, testis, spleen, brain, fat and lung (at protein level).

It localises to the cytoplasm. Its subcellular location is the nucleus. It catalyses the reaction tRNA(Thr) + L-threonine + ATP = L-threonyl-tRNA(Thr) + AMP + diphosphate + H(+). Catalyzes the attachment of threonine to tRNA(Thr) in a two-step reaction: threonine is first activated by ATP to form Thr-AMP and then transferred to the acceptor end of tRNA(Thr). Also edits incorrectly charged tRNA(Thr) via its editing domain, at the post-transfer stage. This chain is Threonine--tRNA ligase 2, cytoplasmic (Tars3), found in Mus musculus (Mouse).